The sequence spans 131 residues: Histone H2A type 1-A (131 aa).

The tract at residues 1-23 is disordered; the sequence is MSGRGKQGGKARAKSKSRSSRAG. Ser2 bears the N-acetylserine mark. A Phosphoserine; by RPS6KA5 modification is found at Ser2. Arg4 is modified (citrulline; alternate). Position 4 is a symmetric dimethylarginine; by PRMT5; alternate (Arg4). Residue Lys6 is modified to N6-(2-hydroxyisobutyryl)lysine. Positions 7–19 are enriched in basic residues; that stretch reads QGGKARAKSKSRS. At Lys10 the chain carries N6-(2-hydroxyisobutyryl)lysine; alternate. At Lys10 the chain carries N6-(beta-hydroxybutyryl)lysine; alternate. Lys10 carries the post-translational modification N6-lactoyllysine; alternate. At Lys10 the chain carries N6-succinyllysine; alternate. Lys14 is subject to N6-(beta-hydroxybutyryl)lysine. Residues Lys14 and Lys16 each participate in a glycyl lysine isopeptide (Lys-Gly) (interchain with G-Cter in ubiquitin) cross-link. Residue Lys37 is modified to N6-(2-hydroxyisobutyryl)lysine; alternate. Lys37 bears the N6-(beta-hydroxybutyryl)lysine; alternate mark. Lys37 carries the post-translational modification N6-crotonyllysine; alternate. N6-(2-hydroxyisobutyryl)lysine occurs at positions 75 and 76. The residue at position 96 (Lys96) is an N6-(2-hydroxyisobutyryl)lysine; alternate. At Lys96 the chain carries N6-(beta-hydroxybutyryl)lysine; alternate. Residue Lys96 is modified to N6-succinyllysine; alternate. Residue Lys96 is modified to N6-glutaryllysine; alternate. N5-methylglutamine is present on Gln105. N6-(2-hydroxyisobutyryl)lysine; alternate is present on Lys119. Lys119 carries the N6-(beta-hydroxybutyryl)lysine; alternate modification. Lys119 and Lys120 each carry N6-crotonyllysine; alternate. Residues Lys119 and Lys120 each carry the N6-glutaryllysine; alternate modification. Residue Lys120 forms a Glycyl lysine isopeptide (Lys-Gly) (interchain with G-Cter in ubiquitin); alternate linkage. Phosphothreonine; by DCAF1 is present on Thr121. The residue at position 127 (Lys127) is an N6-crotonyllysine.

It belongs to the histone H2A family. In terms of assembly, the nucleosome is a histone octamer containing two molecules each of H2A, H2B, H3 and H4 assembled in one H3-H4 heterotetramer and two H2A-H2B heterodimers. The octamer wraps approximately 147 bp of DNA. Post-translationally, deiminated on Arg-4 in granulocytes upon calcium entry. In terms of processing, monoubiquitination of Lys-120 (H2AK119Ub) by RING1, TRIM37 and RNF2/RING2 complex gives a specific tag for epigenetic transcriptional repression and participates in X chromosome inactivation of female mammals. It is involved in the initiation of both imprinted and random X inactivation. Ubiquitinated H2A is enriched in inactive X chromosome chromatin. Ubiquitination of H2A functions downstream of methylation of 'Lys-27' of histone H3 (H3K27me). H2AK119Ub by RNF2/RING2 can also be induced by ultraviolet and may be involved in DNA repair. Monoubiquitination of Lys-120 (H2AK119Ub) by TRIM37 may promote transformation of cells in a number of breast cancers. Following DNA double-strand breaks (DSBs), it is ubiquitinated through 'Lys-63' linkage of ubiquitin moieties by the E2 ligase UBE2N and the E3 ligases RNF8 and RNF168, leading to the recruitment of repair proteins to sites of DNA damage. Ubiquitination at Lys-14 and Lys-16 (H2AK13Ub and H2AK15Ub, respectively) in response to DNA damage is initiated by RNF168 that mediates monoubiquitination at these 2 sites, and 'Lys-63'-linked ubiquitin are then conjugated to monoubiquitin; RNF8 is able to extend 'Lys-63'-linked ubiquitin chains in vitro. Deubiquitinated by USP51 at Lys-14 and Lys-16 (H2AK13Ub and H2AK15Ub, respectively) after damaged DNA is repaired. H2AK119Ub and ionizing radiation-induced 'Lys-63'-linked ubiquitination (H2AK13Ub and H2AK15Ub) are distinct events. Phosphorylation on Ser-2 (H2AS1ph) is enhanced during mitosis. Phosphorylation on Ser-2 by RPS6KA5/MSK1 directly represses transcription. Acetylation of H3 inhibits Ser-2 phosphorylation by RPS6KA5/MSK1. Phosphorylation at Thr-121 (H2AT120ph) by DCAF1 is present in the regulatory region of many tumor suppresor genes and down-regulates their transcription. Post-translationally, glutamine methylation at Gln-105 (H2AQ104me) by FBL is specifically dedicated to polymerase I. It is present at 35S ribosomal DNA locus and impairs binding of the FACT complex. In terms of processing, symmetric dimethylation on Arg-4 by the PRDM1/PRMT5 complex may play a crucial role in the germ-cell lineage. Crotonylation (Kcr) is specifically present in male germ cells and marks testis-specific genes in post-meiotic cells, including X-linked genes that escape sex chromosome inactivation in haploid cells. Crotonylation marks active promoters and enhancers and confers resistance to transcriptional repressors. It is also associated with post-meiotically activated genes on autosomes. Post-translationally, lactylated in macrophages by EP300/P300 by using lactoyl-CoA directly derived from endogenous or exogenous lactate, leading to stimulates gene transcription.

Its subcellular location is the nucleus. The protein localises to the chromosome. In terms of biological role, core component of nucleosome. Nucleosomes wrap and compact DNA into chromatin, limiting DNA accessibility to the cellular machineries which require DNA as a template. Histones thereby play a central role in transcription regulation, DNA repair, DNA replication and chromosomal stability. DNA accessibility is regulated via a complex set of post-translational modifications of histones, also called histone code, and nucleosome remodeling. In Homo sapiens (Human), this protein is Histone H2A type 1-A.